Here is a 123-residue protein sequence, read N- to C-terminus: Small ribosomal subunit protein uS12cz/uS12cy (123 aa).

This sequence belongs to the universal ribosomal protein uS12 family. Part of the 30S ribosomal subunit.

It localises to the plastid. It is found in the chloroplast. Its function is as follows. With S4 and S5 plays an important role in translational accuracy. Located at the interface of the 30S and 50S subunits. The polypeptide is Small ribosomal subunit protein uS12cz/uS12cy (rps12-A) (Nandina domestica (Heavenly bamboo)).